Here is a 131-residue protein sequence, read N- to C-terminus: Large ribosomal subunit protein eL32 (131 aa).

It belongs to the eukaryotic ribosomal protein eL32 family.

This Eremothecium gossypii (strain ATCC 10895 / CBS 109.51 / FGSC 9923 / NRRL Y-1056) (Yeast) protein is Large ribosomal subunit protein eL32 (RPL32).